The primary structure comprises 938 residues: Isoleucine--tRNA ligase (938 aa).

The 'HIGH' region signature appears at 58-68 (PYANGNIHMGH). Position 566 (Glu566) interacts with L-isoleucyl-5'-AMP. Positions 607–611 (KMSKS) match the 'KMSKS' region motif. Position 610 (Lys610) interacts with ATP. Zn(2+) contacts are provided by Cys906, Cys909, Cys926, and Cys929.

It belongs to the class-I aminoacyl-tRNA synthetase family. IleS type 1 subfamily. As to quaternary structure, monomer. Zn(2+) serves as cofactor.

The protein resides in the cytoplasm. The enzyme catalyses tRNA(Ile) + L-isoleucine + ATP = L-isoleucyl-tRNA(Ile) + AMP + diphosphate. Its function is as follows. Catalyzes the attachment of isoleucine to tRNA(Ile). As IleRS can inadvertently accommodate and process structurally similar amino acids such as valine, to avoid such errors it has two additional distinct tRNA(Ile)-dependent editing activities. One activity is designated as 'pretransfer' editing and involves the hydrolysis of activated Val-AMP. The other activity is designated 'posttransfer' editing and involves deacylation of mischarged Val-tRNA(Ile). The polypeptide is Isoleucine--tRNA ligase (Nitratidesulfovibrio vulgaris (strain DP4) (Desulfovibrio vulgaris)).